Consider the following 137-residue polypeptide: ATP synthase epsilon chain 1 (137 aa).

This sequence belongs to the ATPase epsilon chain family. F-type ATPases have 2 components, CF(1) - the catalytic core - and CF(0) - the membrane proton channel. CF(1) has five subunits: alpha(3), beta(3), gamma(1), delta(1), epsilon(1). CF(0) has three main subunits: a, b and c.

It localises to the cell inner membrane. Functionally, produces ATP from ADP in the presence of a proton gradient across the membrane. The chain is ATP synthase epsilon chain 1 (atpC1) from Ralstonia nicotianae (strain ATCC BAA-1114 / GMI1000) (Ralstonia solanacearum).